Reading from the N-terminus, the 306-residue chain is Beta-lactamase 1 (306 aa).

An N-terminal signal peptide occupies residues 1 to 43 (MKNKRMLKIGMCVGILGLSVTSLEAFTGGALQVEAKEKTGQVK). Ser89 functions as the Acyl-ester intermediate in the catalytic mechanism. Glu185 functions as the Proton acceptor in the catalytic mechanism. Substrate is bound at residue 251 to 253 (KSG).

This sequence belongs to the class-A beta-lactamase family.

The enzyme catalyses a beta-lactam + H2O = a substituted beta-amino acid. In terms of biological role, this protein is a beta-lactamase with a substrate specificity for penicillins. In Bacillus mycoides, this protein is Beta-lactamase 1 (blaCI).